Here is a 605-residue protein sequence, read N- to C-terminus: Aspartate--tRNA(Asp/Asn) ligase (605 aa).

An L-aspartate-binding site is contributed by Glu178. Residues 202–205 (QLFK) are aspartate. Arg224 lines the L-aspartate pocket. ATP-binding positions include 224–226 (RDE) and Gln233. Residue His458 coordinates L-aspartate. Glu488 is an ATP binding site. Residue Arg495 coordinates L-aspartate. An ATP-binding site is contributed by 540–543 (GLDR). The disordered stretch occupies residues 580–605 (QQLKELHVTPAKPAKTTAKTKPRPAD).

It belongs to the class-II aminoacyl-tRNA synthetase family. Type 1 subfamily. As to quaternary structure, homodimer.

It is found in the cytoplasm. It catalyses the reaction tRNA(Asx) + L-aspartate + ATP = L-aspartyl-tRNA(Asx) + AMP + diphosphate. In terms of biological role, aspartyl-tRNA synthetase with relaxed tRNA specificity since it is able to aspartylate not only its cognate tRNA(Asp) but also tRNA(Asn). Reaction proceeds in two steps: L-aspartate is first activated by ATP to form Asp-AMP and then transferred to the acceptor end of tRNA(Asp/Asn). The sequence is that of Aspartate--tRNA(Asp/Asn) ligase from Thermosynechococcus vestitus (strain NIES-2133 / IAM M-273 / BP-1).